Consider the following 118-residue polypeptide: Large ribosomal subunit protein bL17 (118 aa).

Belongs to the bacterial ribosomal protein bL17 family. Part of the 50S ribosomal subunit. Contacts protein L32.

In Phytoplasma australiense, this protein is Large ribosomal subunit protein bL17.